The following is a 49-amino-acid chain: Large ribosomal subunit protein eL40 (49 aa).

It belongs to the eukaryotic ribosomal protein eL40 family.

The polypeptide is Large ribosomal subunit protein eL40 (Natronomonas pharaonis (strain ATCC 35678 / DSM 2160 / CIP 103997 / JCM 8858 / NBRC 14720 / NCIMB 2260 / Gabara) (Halobacterium pharaonis)).